The following is a 492-amino-acid chain: Adenosylhomocysteinase (492 aa).

Substrate-binding residues include Thr68, Asp153, and Glu215. An NAD(+)-binding site is contributed by 216-218; the sequence is TTT. Substrate contacts are provided by Lys245 and Asp249. NAD(+) contacts are provided by residues Asn250, 279–284, Glu302, Asn337, 358–360, and Asn406; these read GYGDVG and IGH.

The protein belongs to the adenosylhomocysteinase family. NAD(+) is required as a cofactor.

The protein resides in the cytoplasm. It catalyses the reaction S-adenosyl-L-homocysteine + H2O = L-homocysteine + adenosine. It participates in amino-acid biosynthesis; L-homocysteine biosynthesis; L-homocysteine from S-adenosyl-L-homocysteine: step 1/1. Its function is as follows. May play a key role in the regulation of the intracellular concentration of adenosylhomocysteine. The polypeptide is Adenosylhomocysteinase (Mycobacterium leprae (strain Br4923)).